Reading from the N-terminus, the 626-residue chain is SHC-transforming protein 4 (626 aa).

Residues 1–185 (MRERSQDSQA…KQDGPPLQHL (185 aa)) form a CH2 region. Disordered stretches follow at residues 38-76 (ITSLDEGSPGGSVGNKGSSPPPYPALAPHLPTEDATVSS) and 119-182 (LQEN…GPPL). Positions 120–139 (QENQDQTPSRPASPESNLNR) are enriched in polar residues. The PID domain maps to 186–369 (LGNGLNYCVR…LVDGAPEDRD (184 aa)). Residues 370–521 (HDYYNSIPGK…HIRQQLWDEE (152 aa)) form a CH1 region. Tyr422 is subject to Phosphotyrosine. The region spanning 522 to 613 (CFHGKLSRGA…GSEVRLKQPI (92 aa)) is the SH2 domain.

Interacts (via PID domain) with phosphorylated MUSK (via NPXY motif); undergoes tyrosine phosphorylation downstream of activated MUSK. Interacts with GRB2; the interaction is dependent of Tyr-422 phosphorylation and increased by EGF. In terms of processing, phosphorylated; the phosphorylation is enhanced by EGF. Phosphorylation at Tyr-422 is required for the interaction with GRB2. Expressed in both brain and skeletal muscle; widely expressed in brain namely olfactory bulb, cortex, hippocampus, striatum, thalamus, and brain stem (at protein level). Only expressed in melanomas. Weakly expressed in normal melanocytes and benign nevi. Highly expressed at the transition from radial growth phase to vertical growth phase and metastatic melanomas, when tumor cells acquire migratory competence and invasive potential.

Its subcellular location is the postsynaptic cell membrane. Functionally, activates both Ras-dependent and Ras-independent migratory pathways in melanomas. Contributes to the early phases of agrin-induced tyrosine phosphorylation of CHRNB1. The sequence is that of SHC-transforming protein 4 (Shc4) from Mus musculus (Mouse).